The chain runs to 353 residues: Photosystem II D2 protein (353 aa).

Thr2 is modified (N-acetylthreonine). Thr2 carries the post-translational modification Phosphothreonine. The chain crosses the membrane as a helical span at residues 41-61 (CAYFALGGWFTGTTFVTSWYT). Residue His118 coordinates chlorophyll a. Residues 125 to 141 (GFMLRQFELARSVQLRP) form a helical membrane-spanning segment. Pheophytin a contacts are provided by Gln130 and Asn143. Residues 153-166 (VFVSVFLIYPLGQS) traverse the membrane as a helical segment. Position 198 (His198) interacts with chlorophyll a. A helical membrane pass occupies residues 208 to 228 (AALLCAIHGATVENTLFEDGD). His215 and Phe262 together coordinate a plastoquinone. His215 is a binding site for Fe cation. Residue His269 coordinates Fe cation. The helical transmembrane segment at 279 to 295 (GLWMSALGVVGLALNLR) threads the bilayer.

It belongs to the reaction center PufL/M/PsbA/D family. As to quaternary structure, PSII is composed of 1 copy each of membrane proteins PsbA, PsbB, PsbC, PsbD, PsbE, PsbF, PsbH, PsbI, PsbJ, PsbK, PsbL, PsbM, PsbT, PsbX, PsbY, PsbZ, Psb30/Ycf12, at least 3 peripheral proteins of the oxygen-evolving complex and a large number of cofactors. It forms dimeric complexes. Requires The D1/D2 heterodimer binds P680, chlorophylls that are the primary electron donor of PSII, and subsequent electron acceptors. It shares a non-heme iron and each subunit binds pheophytin, quinone, additional chlorophylls, carotenoids and lipids. There is also a Cl(-1) ion associated with D1 and D2, which is required for oxygen evolution. The PSII complex binds additional chlorophylls, carotenoids and specific lipids. as cofactor.

It is found in the plastid. It localises to the chloroplast thylakoid membrane. It catalyses the reaction 2 a plastoquinone + 4 hnu + 2 H2O = 2 a plastoquinol + O2. In terms of biological role, photosystem II (PSII) is a light-driven water:plastoquinone oxidoreductase that uses light energy to abstract electrons from H(2)O, generating O(2) and a proton gradient subsequently used for ATP formation. It consists of a core antenna complex that captures photons, and an electron transfer chain that converts photonic excitation into a charge separation. The D1/D2 (PsbA/PsbD) reaction center heterodimer binds P680, the primary electron donor of PSII as well as several subsequent electron acceptors. D2 is needed for assembly of a stable PSII complex. The protein is Photosystem II D2 protein of Dioscorea elephantipes (Elephant's foot yam).